Reading from the N-terminus, the 218-residue chain is Protein-methionine-sulfoxide reductase heme-binding subunit MsrQ (218 aa).

Transmembrane regions (helical) follow at residues 14–34 (AVHA…WQVW), 60–80 (LLLI…AVLI), 86–106 (LGLY…WLDL), 121–141 (PYIT…ITST), and 155–175 (LHML…WLVK).

Belongs to the MsrQ family. As to quaternary structure, heterodimer of a catalytic subunit (MsrP) and a heme-binding subunit (MsrQ). FMN is required as a cofactor. It depends on heme b as a cofactor.

The protein resides in the cell inner membrane. Functionally, part of the MsrPQ system that repairs oxidized periplasmic proteins containing methionine sulfoxide residues (Met-O), using respiratory chain electrons. Thus protects these proteins from oxidative-stress damage caused by reactive species of oxygen and chlorine generated by the host defense mechanisms. MsrPQ is essential for the maintenance of envelope integrity under bleach stress, rescuing a wide series of structurally unrelated periplasmic proteins from methionine oxidation. MsrQ provides electrons for reduction to the reductase catalytic subunit MsrP, using the quinone pool of the respiratory chain. The sequence is that of Protein-methionine-sulfoxide reductase heme-binding subunit MsrQ from Xanthomonas campestris pv. campestris (strain B100).